The chain runs to 214 residues: Pyridoxine/pyridoxamine 5'-phosphate oxidase (214 aa).

Residues 9–12 and K68 contribute to the substrate site; that span reads RRSY. FMN contacts are provided by residues 63–68, 78–79, K85, and Q107; these read RVVLLK and YT. Substrate contacts are provided by Y125, R129, and S133. Residues 142-143 and W187 each bind FMN; that span reads QS. 193 to 195 provides a ligand contact to substrate; that stretch reads RLH. An FMN-binding site is contributed by R197.

This sequence belongs to the pyridoxamine 5'-phosphate oxidase family. Homodimer. The cofactor is FMN.

It catalyses the reaction pyridoxamine 5'-phosphate + O2 + H2O = pyridoxal 5'-phosphate + H2O2 + NH4(+). It carries out the reaction pyridoxine 5'-phosphate + O2 = pyridoxal 5'-phosphate + H2O2. It participates in cofactor metabolism; pyridoxal 5'-phosphate salvage; pyridoxal 5'-phosphate from pyridoxamine 5'-phosphate: step 1/1. Its pathway is cofactor metabolism; pyridoxal 5'-phosphate salvage; pyridoxal 5'-phosphate from pyridoxine 5'-phosphate: step 1/1. Functionally, catalyzes the oxidation of either pyridoxine 5'-phosphate (PNP) or pyridoxamine 5'-phosphate (PMP) into pyridoxal 5'-phosphate (PLP). In Christiangramia forsetii (strain DSM 17595 / CGMCC 1.15422 / KT0803) (Gramella forsetii), this protein is Pyridoxine/pyridoxamine 5'-phosphate oxidase.